The chain runs to 490 residues: Xylulose kinase (490 aa).

4 residues coordinate substrate: H99, R170, D280, and N281. ATP contacts are provided by residues W355, 441-442 (GA), and N445.

The protein belongs to the FGGY kinase family. As to quaternary structure, monomer.

It catalyses the reaction D-xylulose + ATP = D-xylulose 5-phosphate + ADP + H(+). In terms of biological role, phosphorylates D-xylulose to produce D-xylulose 5-phosphate, a molecule that may play an important role in the regulation of glucose metabolism and lipogenesis. In Bos taurus (Bovine), this protein is Xylulose kinase (XYLB).